The following is a 575-amino-acid chain: Developmental and secondary metabolism regulator VEL1 (575 aa).

The region spanning 21-225 (GRKLKYTLTV…AEQGCRVRIR (205 aa)) is the Velvet domain. The short motif at 35-40 (ERARAC) is the Nuclear localization signal element. Disordered stretches follow at residues 36–56 (RARACGSGAKSSADRRPVDPP) and 227–402 (DVRM…QSYE). Over residues 274–284 (VHEDPQQRRGS) the composition is skewed to basic and acidic residues. The segment covering 294 to 308 (VVNTPFRTPSISPST) has biased composition (polar residues). The segment covering 334-346 (IQPPHPPPPPPSS) has biased composition (pro residues). 2 stretches are compositionally biased toward polar residues: residues 355–365 (HHNQGPSTQFR) and 385–402 (SYSQFRPPTNPSQQQSYE). Positions 465–509 (AEQPLAMSPLASVTSISRGTQNSAPMPSHNYNKLERSGSYSQYAP) are PEST. The segment at 513–549 (EAPKSTNKRSFNDVFSTPTESLSNGRRPSAIGIDIEE) is disordered. A compositionally biased stretch (polar residues) spans 516-538 (KSTNKRSFNDVFSTPTESLSNGR).

Belongs to the velvet family. VeA subfamily. In terms of assembly, component of the heterotrimeric velvet complex composed of LAE1, VEL1 and VEL2; VEL1 acting as a bridging protein between LAE1 and VEL2.

It is found in the nucleus. It localises to the cytoplasm. In terms of biological role, component of the velvet transcription factor complex that controls sexual/asexual developmental ratio in response to light, promoting sexual development in the darkness while stimulating asexual sporulation under illumination. The velvet complex hat acts as a global regulator for secondary metabolite gene expression. Controls the expression of the oxalic acid and melanin gene clusters. Also controls the expression of proteases and carbohydrate-active enzymes. Involved in the resistance to oxidative stress. Required for full virulence. The protein is Developmental and secondary metabolism regulator VEL1 of Botryotinia fuckeliana (strain B05.10) (Noble rot fungus).